The chain runs to 86 residues: Small ribosomal subunit protein uS17 (86 aa).

Belongs to the universal ribosomal protein uS17 family. As to quaternary structure, part of the 30S ribosomal subunit.

One of the primary rRNA binding proteins, it binds specifically to the 5'-end of 16S ribosomal RNA. The protein is Small ribosomal subunit protein uS17 of Methylococcus capsulatus (strain ATCC 33009 / NCIMB 11132 / Bath).